The sequence spans 227 residues: HTH-type transcriptional regulator ArcR (227 aa).

An a nucleoside 3',5'-cyclic phosphate-binding site is contributed by 41–130 (VRRYNKGQII…LEYLCKNHDD (90 aa)). One can recognise an HTH crp-type domain in the interval 156-227 (KLARERIEKV…KNGKNWMVIK (72 aa)). A DNA-binding region (H-T-H motif) is located at residues 189–208 (IQLLSDLAGISRETTGHIVH).

It localises to the cytoplasm. In terms of biological role, positively regulates the expression of the arcABDCR operon under anaerobic conditions, thus playing an essential role in arginine catabolism. May also control the expression of genes encoding proteins which are involved in anaerobic metabolism. Can bind cyclic AMP. The polypeptide is HTH-type transcriptional regulator ArcR (arcR) (Staphylococcus haemolyticus (strain JCSC1435)).